Here is a 63-residue protein sequence, read N- to C-terminus: Jingdongin-1-MT1 (63 aa).

Residues 1 to 22 (MFTLKKSLLLLFFLGTINLSLC) form the signal peptide. The propeptide at 23–44 (EQERDADEEERRDDDEMDVEVE) is removed in mature form. An intrachain disulfide couples C57 to C63.

Belongs to the frog skin active peptide (FSAP) family. Brevinin subfamily. In terms of tissue distribution, expressed by the skin glands.

It localises to the secreted. Antimicrobial peptide. Active against some Gram-negative and a variety of Gram-positive bacterial strains. Active against fungus C.glabrata 090902 but not against C.neoformans 201211. Shows hemolytic activity against human erythrocytes. This Amolops mantzorum (Sichuan torrent frog) protein is Jingdongin-1-MT1.